The primary structure comprises 287 residues: Cyclopropane mycolic acid synthase 3 (287 aa).

Residues 33–34, 68–76, 94–99, and 123–124 contribute to the S-adenosyl-L-methionine site; these read YS, LLDIGCGWG, TLSENQ, and WE. The active site involves C269.

Belongs to the CFA/CMAS family. In terms of assembly, homodimer.

The protein resides in the cytoplasm. It carries out the reaction a 1-acyl-2-(9Z)-enoyl-sn-glycero-3-phospholipid + S-adenosyl-L-methionine = a 1-acyl-2-(9-cyclopronane)-acyl-sn-glycero-3-phospholipid + S-adenosyl-L-homocysteine + H(+). It functions in the pathway lipid metabolism; mycolic acid biosynthesis. In terms of biological role, involved in the phagosome maturation block (PMB). Catalyzes the conversion of a double bond to a cyclopropane ring at the proximal position of an alpha mycolic acid via the transfer of a methylene group from S-adenosyl-L-methionine. It can use cis, cis 11,14-eicosadienoic acid and linoelaidic acid as substrate. Cyclopropanated mycolic acids are key factors participating in cell envelope permeability, host immunomodulation and persistence. This chain is Cyclopropane mycolic acid synthase 3 (pcaA), found in Mycobacterium tuberculosis (strain CDC 1551 / Oshkosh).